Consider the following 184-residue polypeptide: Ribose 1,5-bisphosphate phosphokinase PhnN (184 aa).

11 to 18 (GPSGAGKD) contacts ATP.

This sequence belongs to the ribose 1,5-bisphosphokinase family.

The catalysed reaction is alpha-D-ribose 1,5-bisphosphate + ATP = 5-phospho-alpha-D-ribose 1-diphosphate + ADP. It functions in the pathway metabolic intermediate biosynthesis; 5-phospho-alpha-D-ribose 1-diphosphate biosynthesis; 5-phospho-alpha-D-ribose 1-diphosphate from D-ribose 5-phosphate (route II): step 3/3. In terms of biological role, catalyzes the phosphorylation of ribose 1,5-bisphosphate to 5-phospho-D-ribosyl alpha-1-diphosphate (PRPP). The chain is Ribose 1,5-bisphosphate phosphokinase PhnN from Burkholderia pseudomallei (strain K96243).